We begin with the raw amino-acid sequence, 142 residues long: 3-hydroxyacyl-[acyl-carrier-protein] dehydratase FabZ (142 aa).

His48 is a catalytic residue.

It belongs to the thioester dehydratase family. FabZ subfamily.

Its subcellular location is the cytoplasm. It catalyses the reaction a (3R)-hydroxyacyl-[ACP] = a (2E)-enoyl-[ACP] + H2O. Its function is as follows. Involved in unsaturated fatty acids biosynthesis. Catalyzes the dehydration of short chain beta-hydroxyacyl-ACPs and long chain saturated and unsaturated beta-hydroxyacyl-ACPs. This chain is 3-hydroxyacyl-[acyl-carrier-protein] dehydratase FabZ, found in Prochlorococcus marinus (strain MIT 9313).